Here is a 230-residue protein sequence, read N- to C-terminus: Urease accessory protein UreF (230 aa).

It belongs to the UreF family. As to quaternary structure, ureD, UreF and UreG form a complex that acts as a GTP-hydrolysis-dependent molecular chaperone, activating the urease apoprotein by helping to assemble the nickel containing metallocenter of UreC. The UreE protein probably delivers the nickel.

Its subcellular location is the cytoplasm. Its function is as follows. Required for maturation of urease via the functional incorporation of the urease nickel metallocenter. The sequence is that of Urease accessory protein UreF from Cupriavidus pinatubonensis (strain JMP 134 / LMG 1197) (Cupriavidus necator (strain JMP 134)).